We begin with the raw amino-acid sequence, 688 residues long: MAAEIDFLREQNRRLNEDFRRYQMESFSKYSSVQKAVCQGEGDDTFENLVFDQSFLAPLVTEYDKHLGELNGQLKYYQKQVGEMKLQLENVIKENERLHSELKDAVEKKLEAFPLGTEVGTDIYADDETVRNLQEQLQLANQEKTQAVELWQTVSQELDRLHKLYQEHMTEAQIHVFESQKQKDQLFDFQQLTKQLHVTNENMEVTNQQFLKTVTEQSVIIEQLRKKLRQAKLELRVAVAKVEELTNVTEDLQGQMKKKEKDVVSAHGREEASDRRLQQLQSSIKQLEIRLCVTIQEANQLRTENTHLEKQTRELQAKCNELENERYEAIVRARNSMQLLEEANLQKSQALLEEKQKEEDIEKMKETVSRFVQDATIRTKKEVANTKKQCNIQISRLTEELSALQMECAEKQGQIERVIKEKKAVEEELEKIYREGRGNESDYRKLEEMHQRFLVSERSKDDLQLRLTRAENRIKQLETDSSEEISRYQEMIQKLQNVLESERENCGLVSEQRLKLQQENKQLRKETESLRKIALEAQKKAKVKISTMEHEFSIKERGFEVQLREMEDSNRNSIVELRHLLATQQKAANRWKEETKKLTESAEIRINNLKSELSRQKLHTQELLSQLEMANEKVAENEKLILEHQEKANRLQRRLSQAEERAASASQQLSVITVQRRKAASLMNLENI.

Ala2 carries the N-acetylalanine modification. Residues 69 to 673 (ELNGQLKYYQ…SASQQLSVIT (605 aa)) are a coiled coil. At Ser681 the chain carries Phosphoserine.

In terms of assembly, interacts with SCN10A and clathrin. Identified in a complex containing SCN10A, clathrin and SCLT1.

It localises to the cytoplasm. The protein resides in the cytoskeleton. The protein localises to the microtubule organizing center. It is found in the centrosome. Its subcellular location is the centriole. Functionally, adapter protein that links SCN10A to clathrin. Regulates SCN10A channel activity, possibly by promoting channel internalization. This Homo sapiens (Human) protein is Sodium channel and clathrin linker 1 (SCLT1).